A 404-amino-acid polypeptide reads, in one-letter code: CinA-like protein (404 aa).

It belongs to the CinA family.

This chain is CinA-like protein, found in Deinococcus radiodurans (strain ATCC 13939 / DSM 20539 / JCM 16871 / CCUG 27074 / LMG 4051 / NBRC 15346 / NCIMB 9279 / VKM B-1422 / R1).